The sequence spans 21 residues: Large ribosomal subunit protein uL29 (21 aa).

The protein belongs to the universal ribosomal protein uL29 family.

The protein is Large ribosomal subunit protein uL29 (rpmC) of Brevundimonas diminuta (Pseudomonas diminuta).